A 905-amino-acid chain; its full sequence is DNA gyrase subunit A (905 aa).

The region spanning 35–524 (IPDVRDGLKP…GEFDQDIEDL (490 aa)) is the Topo IIA-type catalytic domain. Tyr-123 (O-(5'-phospho-DNA)-tyrosine intermediate) is an active-site residue. The GyrA-box motif lies at 551 to 557 (QKRGGKG). Residues 885 to 905 (TAESEEDSELEEEGLEQSEEV) form a disordered region. The span at 886–905 (AESEEDSELEEEGLEQSEEV) shows a compositional bias: acidic residues.

This sequence belongs to the type II topoisomerase GyrA/ParC subunit family. In terms of assembly, heterotetramer, composed of two GyrA and two GyrB chains. In the heterotetramer, GyrA contains the active site tyrosine that forms a transient covalent intermediate with DNA, while GyrB binds cofactors and catalyzes ATP hydrolysis.

The protein localises to the cytoplasm. The catalysed reaction is ATP-dependent breakage, passage and rejoining of double-stranded DNA.. A type II topoisomerase that negatively supercoils closed circular double-stranded (ds) DNA in an ATP-dependent manner to modulate DNA topology and maintain chromosomes in an underwound state. Negative supercoiling favors strand separation, and DNA replication, transcription, recombination and repair, all of which involve strand separation. Also able to catalyze the interconversion of other topological isomers of dsDNA rings, including catenanes and knotted rings. Type II topoisomerases break and join 2 DNA strands simultaneously in an ATP-dependent manner. This is DNA gyrase subunit A from Rickettsia conorii (strain ATCC VR-613 / Malish 7).